The sequence spans 215 residues: CUE domain-containing protein 4, mitochondrial (215 aa).

A mitochondrion-targeting transit peptide spans 1-29 (MQPEQLAGCAVVLTVTVLTLRWMFRVDKG). A CUE domain is found at 48-90 (VNSEHVHLVKTVFPHLESSAIAYDLQKTKNVDATIENALRGQP). The disordered stretch occupies residues 109-191 (GAGASSHSEE…KEREELFRKR (83 aa)). Low complexity-rich tracts occupy residues 122–140 (SHEVTSNVSSGSSASSLAS) and 153–165 (SSRISSSDNSSSS). The segment covering 180–191 (SKKEREELFRKR) has biased composition (basic and acidic residues).

The protein resides in the mitochondrion. This chain is CUE domain-containing protein 4, mitochondrial, found in Schizosaccharomyces pombe (strain 972 / ATCC 24843) (Fission yeast).